The primary structure comprises 552 residues: Pyrophosphate--fructose 6-phosphate 1-phosphotransferase subunit beta (552 aa).

Gly90 is a diphosphate binding site. Residue Asp184 participates in Mg(2+) binding. Substrate is bound by residues 212 to 214 (TID), 251 to 252 (KY), 259 to 261 (MGR), Glu320, and 425 to 428 (YEGR). The active-site Proton acceptor is the Asp214.

The protein belongs to the phosphofructokinase type A (PFKA) family. PPi-dependent PFK group II subfamily. Clade 'Long' sub-subfamily. Tetramer of two alpha (regulatory) and two beta (catalytic) chains. It depends on Mg(2+) as a cofactor.

The protein resides in the cytoplasm. The catalysed reaction is beta-D-fructose 6-phosphate + diphosphate = beta-D-fructose 1,6-bisphosphate + phosphate + H(+). Its pathway is carbohydrate degradation; glycolysis; D-glyceraldehyde 3-phosphate and glycerone phosphate from D-glucose: step 3/4. Its activity is regulated as follows. Allosterically activated by fructose 2,6-bisphosphate. Functionally, catalytic subunit of pyrophosphate--fructose 6-phosphate 1-phosphotransferase. Catalyzes the phosphorylation of D-fructose 6-phosphate, the first committing step of glycolysis. Uses inorganic phosphate (PPi) as phosphoryl donor instead of ATP like common ATP-dependent phosphofructokinases (ATP-PFKs), which renders the reaction reversible, and can thus function both in glycolysis and gluconeogenesis. The polypeptide is Pyrophosphate--fructose 6-phosphate 1-phosphotransferase subunit beta (Ricinus communis (Castor bean)).